We begin with the raw amino-acid sequence, 283 residues long: Digeranylgeranylglyceryl phosphate synthase (283 aa).

8 helical membrane-spanning segments follow: residues 5-27 (VEII…AILA), 37-57 (AMLA…YFDY), 85-105 (LLFI…DTWI), 128-148 (PLIG…FAGY), 152-172 (EGLI…MTTA), 203-223 (AIIA…LYIY), 228-248 (INYL…AVLL), and 263-283 (LKTG…TITF).

Belongs to the UbiA prenyltransferase family. DGGGP synthase subfamily. Mg(2+) is required as a cofactor.

It localises to the cell membrane. It carries out the reaction sn-3-O-(geranylgeranyl)glycerol 1-phosphate + (2E,6E,10E)-geranylgeranyl diphosphate = 2,3-bis-O-(geranylgeranyl)-sn-glycerol 1-phosphate + diphosphate. The protein operates within membrane lipid metabolism; glycerophospholipid metabolism. Prenyltransferase that catalyzes the transfer of the geranylgeranyl moiety of geranylgeranyl diphosphate (GGPP) to the C2 hydroxyl of (S)-3-O-geranylgeranylglyceryl phosphate (GGGP). This reaction is the second ether-bond-formation step in the biosynthesis of archaeal membrane lipids. This Methanobrevibacter smithii (strain ATCC 35061 / DSM 861 / OCM 144 / PS) protein is Digeranylgeranylglyceryl phosphate synthase.